A 138-amino-acid chain; its full sequence is Envelope glycoprotein N (138 aa).

The first 21 residues, 1–21 (MEWNTLVLGLLVLSVVAESSG), serve as a signal peptide directing secretion. The Virion surface segment spans residues 22 to 101 (NNSSTSTSAT…SHMYELSLSS (80 aa)). Residues 102-122 (FAAWWTMLNALILMGAFCIVL) form a helical membrane-spanning segment. The Intravirion segment spans residues 123 to 138 (RHCCFQNFTATTTKGY).

Belongs to the herpesviridae glycoprotein N family. In terms of assembly, interacts (via N-terminus) with gM (via N-terminus). The gM-gN heterodimer forms the gCII complex. Post-translationally, O-glycosylated.

The protein resides in the virion membrane. It localises to the host membrane. The protein localises to the host Golgi apparatus. Its subcellular location is the host trans-Golgi network. Its function is as follows. Envelope glycoprotein necessary for proper maturation of gM and modulation of its membrane fusion activity. Also plays a critical role in virion morphogenesis. The protein is Envelope glycoprotein N of Human cytomegalovirus (strain AD169) (HHV-5).